Here is a 218-residue protein sequence, read N- to C-terminus: Large ribosomal subunit protein uL3 (218 aa).

This sequence belongs to the universal ribosomal protein uL3 family. As to quaternary structure, part of the 50S ribosomal subunit. Forms a cluster with proteins L14 and L19.

Functionally, one of the primary rRNA binding proteins, it binds directly near the 3'-end of the 23S rRNA, where it nucleates assembly of the 50S subunit. The protein is Large ribosomal subunit protein uL3 of Syntrophus aciditrophicus (strain SB).